Consider the following 189-residue polypeptide: Protein Rex (189 aa).

Residues 1-16 (MPKTRRRPRRSQRKRP) are compositionally biased toward basic residues. Residues 1 to 27 (MPKTRRRPRRSQRKRPPTPWPTSQGLD) form a disordered region. The short motif at 2 to 18 (PKTRRRPRRSQRKRPPT) is the Nuclear localization signal, and RNA-binding (RxRE) element. The interval 56–70 (RPAYIVTPYWPPVQS) is homomultimerization. Ser70 carries the post-translational modification Phosphoserine; by host. The Nuclear export signal motif lies at 82–93 (LSAQLYSSLSLD). The interval 87 to 189 (YSSLSLDSPP…PPSPGPSCPM (103 aa)) is disordered. Over residues 105–114 (PLRSLPRQSL) the composition is skewed to low complexity. Residues 123 to 131 (PSSRPCANT) form a homomultimerization region. Polar residues predominate over residues 143 to 164 (LGSTSQPCLFQTPDSGPKTCTP). Thr174 bears the Phosphothreonine; by host mark. The residue at position 177 (Ser177) is a Phosphoserine; by host. Over residues 178–189 (FPPPSPGPSCPM) the composition is skewed to pro residues.

This sequence belongs to the deltaretrovirus Rex protein family. Homomultimer. Multimeric assembly is essential for activity and involves XPO1. Binds to human XPO1 and KPNB1. Interacts (via N-terminal nuclear localization signal) with human NPM1. Phosphorylated.

It localises to the host nucleus. Its subcellular location is the host nucleolus. It is found in the host cytoplasm. Rex escorts unspliced gag-pro-pol and singly spliced env mRNAs out of the nucleus of infected cells. These mRNAs carry a recognition sequence called Rex responsive element (RxRE or XRE) located at the 3' region of the long terminal repeat (LTR). This function is essential since most HTLV proteins are translated from unspliced or partially spliced pre-mRNAs that cannot exit the nucleus by the pathway used by fully processed cellular mRNAs. Rex itself is translated from a fully spliced mRNA that probably readily exits the nucleus. Rex's nuclear localization signal (NLS) binds directly to KPNB1/importin beta-1 without previous binding to KPNA1/importin alpha-1. KPNB1 binds to the GDP bound form of RAN (Ran-GDP) and targets Rex to the nucleus. In the nucleus, the conversion from Ran-GDP to Ran-GTP dissociates Rex from KPNB1 and allows Rex's binding to the RRE in viral pre-mRNAs. Rex multimerizes on the RRE via cooperative assembly. This multimerization is critical for its full biological activity, since it may shield the viral RNA from being spliced or down-regulated, and probably exposes Rex's nuclear export signal (NES) to the surface. Rex can then form a complex with XPO1/CRM1, RANBP3 and Ran-GTP, leading to nuclear export of the complex. Conversion from Ran-GTP to Ran-GDP mediates dissociation of the Rex/RRE/XPO1/RANBP3/RAN complex, so that Rex can return to the nucleus for a subsequent round of export. The sequence is that of Protein Rex from Human T-cell leukemia virus 1 (isolate Caribbea HS-35 subtype A) (HTLV-1).